Consider the following 342-residue polypeptide: Trans-3-hydroxy-L-proline dehydratase (342 aa).

S90 serves as the catalytic Proton acceptor. Residues 91–92 (GS), D252, and 257–258 (GT) each bind substrate.

This sequence belongs to the proline racemase family.

The enzyme catalyses trans-3-hydroxy-L-proline = 1-pyrroline-2-carboxylate + H2O. It carries out the reaction trans-4-hydroxy-L-proline = cis-4-hydroxy-D-proline. Functionally, catalyzes the dehydration of trans-3-hydroxy-L-proline (t3LHyp) to Delta(1)-pyrroline-2-carboxylate (Pyr2C). Can also catalyze the epimerization of trans-4-hydroxy-L-proline (t4LHyp) to cis-4-hydroxy-D-proline (c4DHyp), albeit with 30-fold lower efficiency. Is likely involved in both degradation pathways that convert t3LHyp to L-proline and t4LHyp to alpha-ketoglutarate, which would allow A.tumefaciens to grow on t3LHyp or t4LHyp as a sole carbon source. Displays no proline racemase activity. The polypeptide is Trans-3-hydroxy-L-proline dehydratase (Agrobacterium fabrum (strain C58 / ATCC 33970) (Agrobacterium tumefaciens (strain C58))).